A 441-amino-acid polypeptide reads, in one-letter code: Hexane cyclase gkaB (441 aa).

The first 25 residues, 1 to 25 (MTKFLAGAAIVLAVAFGSFFSQSST), serve as a signal peptide directing secretion. Residues asparagine 77, asparagine 153, asparagine 184, and asparagine 308 are each glycosylated (N-linked (GlcNAc...) asparagine).

The protein belongs to the Diels-Alderase family.

Its pathway is mycotoxin biosynthesis. Hexane cyclase; part of the gene cluster that mediates the biosynthesis of GKK1032, fungal natural products containing a macrocyclic para-cyclophane connected to a decahydrofluorene ring system that show potent antitumor activities. Within the pathway, gkaB functions synergistically with gkaX and gkaZ to form the cyclophane. The pathway begins with the PKS-NRPS gkaA which, with the help of the trans-enoyl reductase gkaC, synthesizes the polyketide-tyrosyl acyl thioester product which can be reductively off-loaded by the terminal reductase (R) domain in gkaA. The alpha/beta hydrolase gkaG is then required to catalyze the subsequent Knoevenagel condensation that affords the 3-pyrrolin-2-one ring, whereas the three proteins gkaB, gkaX and gkaZ then function synergistically to form the cyclophane. This chain is Hexane cyclase gkaB, found in Penicillium citrinum.